The chain runs to 350 residues: MERIIMHYDMDAFYASIEINRNPKLKNKPLVVGENIVTTASYEARKYDIHSAMKVSDAKLLCPKLIVLPVDKTEYIRISNEIHNLILKITNKVEFVATDEGYIDLTDVIKPENKKAFVIKFKQRIKELTNLTCSVGIGFNKLSAKIASDINKPFGFFIFENEEEFIKHISDKKIKIIPGVGKKFFEILKNDKIFYVKDIFKYPLDYLVKKYGKSRGENLYCSVRGIDFDEVEYQREIYSIGNEETFLIPLQNNSEIIREFNSLFEYTFERLLKNNVFTQSITIKMRYTSFKTYTKSKKLKFSTRSKDFLYNEMFELINSFEKEDEVRLLGVYFGDIKKSNLVQLALNKNL.

Residues 5–181 (IMHYDMDAFY…KKIKIIPGVG (177 aa)) form the UmuC domain. Mg(2+) contacts are provided by aspartate 9 and aspartate 99. Glutamate 100 is an active-site residue.

This sequence belongs to the DNA polymerase type-Y family. In terms of assembly, monomer. The cofactor is Mg(2+).

Its subcellular location is the cytoplasm. It carries out the reaction DNA(n) + a 2'-deoxyribonucleoside 5'-triphosphate = DNA(n+1) + diphosphate. Its function is as follows. Poorly processive, error-prone DNA polymerase involved in untargeted mutagenesis. Copies undamaged DNA at stalled replication forks, which arise in vivo from mismatched or misaligned primer ends. These misaligned primers can be extended by PolIV. Exhibits no 3'-5' exonuclease (proofreading) activity. May be involved in translesional synthesis, in conjunction with the beta clamp from PolIII. The chain is DNA polymerase IV from Fusobacterium nucleatum subsp. nucleatum (strain ATCC 25586 / DSM 15643 / BCRC 10681 / CIP 101130 / JCM 8532 / KCTC 2640 / LMG 13131 / VPI 4355).